Consider the following 280-residue polypeptide: Energy-coupling factor transporter ATP-binding protein EcfA1 (280 aa).

Residues 7-241 (IEVAHLKYEY…GQRLLDLGLD (235 aa)) form the ABC transporter domain. 41–48 (GHNGSGKS) provides a ligand contact to ATP.

The protein belongs to the ABC transporter superfamily. Energy-coupling factor EcfA family. Forms a stable energy-coupling factor (ECF) transporter complex composed of 2 membrane-embedded substrate-binding proteins (S component), 2 ATP-binding proteins (A component) and 2 transmembrane proteins (T component).

It is found in the cell membrane. Its function is as follows. ATP-binding (A) component of a common energy-coupling factor (ECF) ABC-transporter complex. Unlike classic ABC transporters this ECF transporter provides the energy necessary to transport a number of different substrates. The polypeptide is Energy-coupling factor transporter ATP-binding protein EcfA1 (Latilactobacillus sakei subsp. sakei (strain 23K) (Lactobacillus sakei subsp. sakei)).